A 2440-amino-acid chain; its full sequence is Nuclear receptor corepressor 1 (2440 aa).

The segment covering Met-1–Ser-18 has biased composition (polar residues). 2 disordered regions span residues Met-1–Ser-177 and Gln-206–Lys-231. The tract at residues Met-1 to Ile-373 is interaction with ZBTB33 and HEXIM1. Residues Ser-51–Gln-64 are compositionally biased toward low complexity. 3 stretches are compositionally biased toward basic and acidic residues: residues Pro-77–Ser-88, Val-99–Phe-119, and Ala-141–Ala-155. A Phosphoserine modification is found at Ser-172. Residues Ser-174–Pro-216 are a coiled coil. Residues Glu-212 to Lys-221 are compositionally biased toward basic and acidic residues. Ser-224 is subject to Phosphoserine. Positions Phe-254–Asp-312 are interaction with SIN3A/B. Residues Ala-299 to Asn-328 are a coiled coil. The 52-residue stretch at Gln-435–Asn-486 folds into the SANT 1 domain. Disordered regions lie at residues Lys-497–Glu-632 and Asn-677–Leu-915. Positions Arg-501–Thr-557 form a coiled coil. 2 stretches are compositionally biased toward basic and acidic residues: residues Ser-509–Glu-531 and Lys-541–Gly-556. The span at Glu-592–Glu-605 shows a compositional bias: low complexity. Residues Glu-606–Pro-617 show a composition bias toward pro residues. The region spanning Val-623–Asn-674 is the SANT 2 domain. Polar residues predominate over residues Gln-698–Ala-708. The segment covering Gln-709–Val-728 has biased composition (acidic residues). Low complexity predominate over residues Glu-752–Ala-768. Positions Glu-781 to Thr-792 are enriched in polar residues. The segment covering Asp-820 to Asp-859 has biased composition (basic and acidic residues). 2 stretches are compositionally biased toward polar residues: residues Gln-864–Cys-883 and Ser-906–Leu-915. Positions Arg-988–Thr-1816 are interaction with ETO. Residue Ser-999 is modified to Phosphoserine. Residues Val-1022–Ser-1046 form a disordered region. Lys-1106 is covalently cross-linked (Glycyl lysine isopeptide (Lys-Gly) (interchain with G-Cter in SUMO1); alternate). A Glycyl lysine isopeptide (Lys-Gly) (interchain with G-Cter in SUMO2); alternate cross-link involves residue Lys-1106. Phosphoserine is present on Ser-1111. Residue Lys-1184 forms a Glycyl lysine isopeptide (Lys-Gly) (interchain with G-Cter in SUMO2) linkage. The interval Lys-1184 to Ala-1204 is disordered. A phosphoserine mark is found at Ser-1195, Ser-1196, Ser-1249, Ser-1263, Ser-1281, and Ser-1322. At Lys-1336 the chain carries N6-acetyllysine. Thr-1367 carries the post-translational modification Phosphothreonine. Lys-1389 is covalently cross-linked (Glycyl lysine isopeptide (Lys-Gly) (interchain with G-Cter in SUMO2)). A Glycyl lysine isopeptide (Lys-Gly) (interchain with G-Cter in SUMO2); alternate cross-link involves residue Lys-1412. Residue Lys-1412 is modified to N6-acetyllysine; alternate. The segment at Ala-1440 to Leu-1459 is disordered. Phosphoserine is present on residues Ser-1450 and Ser-1472. Residues Tyr-1488 to Ser-1512 show a composition bias toward polar residues. The disordered stretch occupies residues Tyr-1488–Ser-1554. Residues Arg-1501 to Asp-2440 form an interaction with C1D region. A Glycyl lysine isopeptide (Lys-Gly) (interchain with G-Cter in SUMO2) cross-link involves residue Lys-1518. A Phosphoserine modification is found at Ser-1592. Disordered regions lie at residues Pro-1690–Pro-1759 and Ser-1884–Arg-1922. 2 stretches are compositionally biased toward basic and acidic residues: residues Ala-1712–Ile-1729 and Ala-1903–Thr-1921. Positions Ile-1933–Ile-1937 match the CORNR box 1 motif. The disordered stretch occupies residues Ser-1943–Pro-1969. The segment covering Ser-1952 to Ser-1963 has biased composition (low complexity). Residues Ser-1977 and Ser-1981 each carry the phosphoserine modification. Residues Pro-2006 to Gln-2041 form a disordered region. The span at Gln-2020–Gln-2035 shows a compositional bias: low complexity. Residues Pro-2032–Pro-2115 form an ID1 region. The tract at residues Arg-2047–Thr-2050 is required for interaction with RARA in the absence of its ligand. The CORNR box 2 motif lies at Ile-2055 to Ile-2059. Positions Gln-2067–Ser-2086 are enriched in low complexity. Residues Gln-2067–Val-2155 form a disordered region. Residues Ala-2087–Val-2110 show a composition bias toward polar residues. 5 positions are modified to phosphoserine: Ser-2102, Ser-2120, Ser-2136, Ser-2151, and Ser-2184. The segment covering Leu-2124–Val-2142 has biased composition (basic and acidic residues). An ID2 region spans residues Ile-2212–Gly-2273. The short motif at Leu-2263–Ile-2267 is the CORNR box 3 element. Positions Ser-2287–Asp-2440 are disordered. A compositionally biased stretch (polar residues) spans Thr-2296–Gly-2305. At Thr-2399 the chain carries Phosphothreonine. 2 stretches are compositionally biased toward polar residues: residues Ala-2407 to Arg-2418 and Gln-2431 to Asp-2440. Phosphoserine occurs at positions 2436 and 2438.

This sequence belongs to the N-CoR nuclear receptor corepressors family. In terms of assembly, forms a large corepressor complex that contains SIN3A/B and histone deacetylases HDAC1 and HDAC2. This complex associates with the thyroid receptor (TR) and the retinoid acid receptor (RAR) in the absence of ligand. Interacts directly with RARA; the interaction is facilitated with RARA trimethylation. Component of the N-Cor repressor complex, at least composed of CBFA2T3, HEXIM1, NCOR1, NCOR2, HDAC3, TBL1X, TBL1XR1, CORO2A and GPS2. Interacts with ZBTB33; the interaction serves to recruit the N-CoR complex to promoter regions containing methylated CpG dinucleotides. Interacts with TRIM28 and KDM3A. Interacts (via the RD1 domain) with BAZ1A (via its N-terminal); the interaction corepresses a number of NCOR1-regulated genes. Interacts with BCL6, C1D, DACH1, HEXIM1, HDAC7, RORA, RORC, SAP30, SIAH2, SIN3A and SIN3B. May interact with DEAF1. Interacts with RXRA. Interacts with SETD5. Interacts with VDR. Interacts with ZBTB7A. Interacts with AR. Interacts with HDAC3. Post-translationally, ubiquitinated; mediated by SIAH2 and leading to its subsequent proteasomal degradation.

The protein localises to the nucleus. Mediates transcriptional repression by certain nuclear receptors. Part of a complex which promotes histone deacetylation and the formation of repressive chromatin structures which may impede the access of basal transcription factors. Participates in the transcriptional repressor activity produced by BCL6. Recruited by ZBTB7A to the androgen response elements/ARE on target genes, negatively regulates androgen receptor signaling and androgen-induced cell proliferation. Mediates the NR1D1-dependent repression and circadian regulation of TSHB expression. The NCOR1-HDAC3 complex regulates the circadian expression of the core clock gene ARTNL/BMAL1 and the genes involved in lipid metabolism in the liver. The protein is Nuclear receptor corepressor 1 (NCOR1) of Homo sapiens (Human).